Reading from the N-terminus, the 460-residue chain is Crocetin glucosyltransferase 2 (460 aa).

The active-site Proton acceptor is the histidine 19. Histidine 19 contacts an anthocyanidin. Residues threonine 133, glutamine 333, histidine 348, tryptophan 351, asparagine 352, serine 353, glutamate 356, aspartate 372, and glutamine 373 each coordinate UDP-alpha-D-glucose.

The protein belongs to the UDP-glycosyltransferase family. As to expression, mainly expressed in fully developed stigmas.

It carries out the reaction crocetin + UDP-alpha-D-glucose = beta-D-glucosyl crocetin + UDP. It catalyses the reaction beta-D-glucosyl crocetin + UDP-alpha-D-glucose = bis(beta-D-glucosyl) crocetin + UDP. The enzyme catalyses beta-D-gentiobiosyl crocetin + UDP-alpha-D-glucose = beta-D-gentiobiosyl beta-D-glucosyl crocetin + UDP. Crocetin glucosyltransferase involved in the synthesis of crocin, one of the apocarotenoids responsible for the color and bitter taste of saffron. The chain is Crocetin glucosyltransferase 2 (GLT2) from Crocus sativus (Saffron).